Reading from the N-terminus, the 232-residue chain is Ubiquinone biosynthesis O-methyltransferase (232 aa).

Residues Arg36, Gly55, Asp76, and Leu120 each coordinate S-adenosyl-L-methionine.

It belongs to the methyltransferase superfamily. UbiG/COQ3 family.

The enzyme catalyses a 3-demethylubiquinol + S-adenosyl-L-methionine = a ubiquinol + S-adenosyl-L-homocysteine + H(+). The catalysed reaction is a 3-(all-trans-polyprenyl)benzene-1,2-diol + S-adenosyl-L-methionine = a 2-methoxy-6-(all-trans-polyprenyl)phenol + S-adenosyl-L-homocysteine + H(+). It participates in cofactor biosynthesis; ubiquinone biosynthesis. Its function is as follows. O-methyltransferase that catalyzes the 2 O-methylation steps in the ubiquinone biosynthetic pathway. This is Ubiquinone biosynthesis O-methyltransferase from Pseudomonas aeruginosa (strain LESB58).